The primary structure comprises 91 residues: MSNKYCQALVELRNKPAHELKEVGDQWRTPDNIFWGINTLFGPFVLDLFTDGDNAKCAAYYTAEDNALAHDWSERLAELKGAAFGNPPYPW.

The sequence is that of Putative methyltransferase YfdM (yfdM) from Escherichia coli (strain K12).